Here is a 201-residue protein sequence, read N- to C-terminus: MELVLKDAQSALEVSETTFGRDFNEALVHQVVVAYAANARQGTRAQKTRAEVIGSGKKPWRQKGTGRARAGTVKGPIWRGGGVTFAAKAQDHSQKVNKKMYRGALKSIFSELVRQDRLIVVESFSVEAPKTKELKAKLAEMNLEDVLIVTPEIDENLFLAARNLYKVDVRDVAGIDPVSLIAFNKVLVTADAVKQIEEMLG.

Residues 46–71 (QKTRAEVIGSGKKPWRQKGTGRARAG) form a disordered region.

It belongs to the universal ribosomal protein uL4 family. Part of the 50S ribosomal subunit.

One of the primary rRNA binding proteins, this protein initially binds near the 5'-end of the 23S rRNA. It is important during the early stages of 50S assembly. It makes multiple contacts with different domains of the 23S rRNA in the assembled 50S subunit and ribosome. Functionally, forms part of the polypeptide exit tunnel. The sequence is that of Large ribosomal subunit protein uL4 from Shewanella sediminis (strain HAW-EB3).